The primary structure comprises 217 residues: ATP-dependent Clp protease proteolytic subunit 1 (217 aa).

A disordered region spans residues methionine 1–serine 24. Serine 108 acts as the Nucleophile in catalysis. Histidine 133 is a catalytic residue.

The protein belongs to the peptidase S14 family. Fourteen ClpP subunits assemble into 2 heptameric rings which stack back to back to give a disk-like structure with a central cavity, resembling the structure of eukaryotic proteasomes.

The protein resides in the cytoplasm. The catalysed reaction is Hydrolysis of proteins to small peptides in the presence of ATP and magnesium. alpha-casein is the usual test substrate. In the absence of ATP, only oligopeptides shorter than five residues are hydrolyzed (such as succinyl-Leu-Tyr-|-NHMec, and Leu-Tyr-Leu-|-Tyr-Trp, in which cleavage of the -Tyr-|-Leu- and -Tyr-|-Trp bonds also occurs).. Functionally, cleaves peptides in various proteins in a process that requires ATP hydrolysis. Has a chymotrypsin-like activity. Plays a major role in the degradation of misfolded proteins. The chain is ATP-dependent Clp protease proteolytic subunit 1 from Streptomyces avermitilis (strain ATCC 31267 / DSM 46492 / JCM 5070 / NBRC 14893 / NCIMB 12804 / NRRL 8165 / MA-4680).